A 230-amino-acid polypeptide reads, in one-letter code: MNMMTVKQGVWAALLWPYLLAASIPLDCKDEQGSFSACPSISQEKLLDRVIQHAELIYRVSEESCSMFEEMFVPFPLRLQRNQAGYACITKALPIPSSKSEIQQISDTWLLHSVLLLVQSWIDPLVYLQTTLDRYDNASEMLLNKTKWVSDKLISLEQGVVVLIRKMLDEGMLTATYNEQGLFQYDVLPDMLESVMRDYTLLSCFKKDAHKMEIFLKLLKCRQTDKYNCP.

Residues 1-23 (MNMMTVKQGVWAALLWPYLLAAS) form the signal peptide. 3 disulfides stabilise this stretch: C28-C38, C88-C204, and C221-C229. 2 N-linked (GlcNAc...) asparagine glycosylation sites follow: N137 and N144.

The protein belongs to the somatotropin/prolactin family.

It is found in the secreted. This chain is Somatolactin, found in Hippoglossus hippoglossus (Atlantic halibut).